Reading from the N-terminus, the 368-residue chain is F-box/kelch-repeat protein At2g44700 (368 aa).

A disordered region spans residues 1–23 (MSSSNEPPRKTDQPSSSSASASA). The segment covering 14–23 (PSSSSASASA) has biased composition (low complexity). One can recognise an F-box domain in the interval 25–71 (PSLFLSLPLEIISMILARVPKRYYPILCSVSKNMRSLVRSPEIHKAR). One copy of the Kelch repeat lies at 177-221 (KVYVIGGYQDDEIAAESFDLNTQTWEAAPIPDEKESHRWICKANV).

This chain is F-box/kelch-repeat protein At2g44700, found in Arabidopsis thaliana (Mouse-ear cress).